Consider the following 87-residue polypeptide: Putative regulatory protein syc0519_c (87 aa).

This sequence belongs to the RemA family.

The polypeptide is Putative regulatory protein syc0519_c (Synechococcus sp. (strain ATCC 27144 / PCC 6301 / SAUG 1402/1) (Anacystis nidulans)).